Here is a 122-residue protein sequence, read N- to C-terminus: Small ribosomal subunit protein uS13 (122 aa).

The interval 95-122 (GLPVRGQRTHTNARTRKGPRRGTVGKKK) is disordered.

Belongs to the universal ribosomal protein uS13 family. As to quaternary structure, part of the 30S ribosomal subunit. Forms a loose heterodimer with protein S19. Forms two bridges to the 50S subunit in the 70S ribosome.

Functionally, located at the top of the head of the 30S subunit, it contacts several helices of the 16S rRNA. In the 70S ribosome it contacts the 23S rRNA (bridge B1a) and protein L5 of the 50S subunit (bridge B1b), connecting the 2 subunits; these bridges are implicated in subunit movement. Contacts the tRNAs in the A and P-sites. The protein is Small ribosomal subunit protein uS13 of Nitratidesulfovibrio vulgaris (strain ATCC 29579 / DSM 644 / CCUG 34227 / NCIMB 8303 / VKM B-1760 / Hildenborough) (Desulfovibrio vulgaris).